Reading from the N-terminus, the 394-residue chain is Probable fimbrial assembly protein FimD, serogroup H1 (394 aa).

The polypeptide is Probable fimbrial assembly protein FimD, serogroup H1 (fimD) (Dichelobacter nodosus (Bacteroides nodosus)).